An 817-amino-acid chain; its full sequence is Transcription factor yanR (817 aa).

A DNA-binding region (zn(2)-C6 fungal-type) is located at residues C19–C46. Disordered regions lie at residues G102–D161, H180–L218, and S733–S775. A compositionally biased stretch (pro residues) spans L113–Q127. Polar residues predominate over residues S146–P158. Low complexity predominate over residues S184–S195. Composition is skewed to polar residues over residues A208–G217 and E748–S760.

It localises to the nucleus. Its function is as follows. Transcription factor that regulates the expression of the gene cluster that mediates the biosynthesis of yanuthone D, a fungal isoprenoid epoxycyclohexenone that acts as an antibiotic against fungi and bacteria. The chain is Transcription factor yanR from Aspergillus niger (strain ATCC 1015 / CBS 113.46 / FGSC A1144 / LSHB Ac4 / NCTC 3858a / NRRL 328 / USDA 3528.7).